Reading from the N-terminus, the 180-residue chain is Large ribosomal subunit protein uL6 (180 aa).

Belongs to the universal ribosomal protein uL6 family. Part of the 50S ribosomal subunit.

Functionally, this protein binds to the 23S rRNA, and is important in its secondary structure. It is located near the subunit interface in the base of the L7/L12 stalk, and near the tRNA binding site of the peptidyltransferase center. The protein is Large ribosomal subunit protein uL6 of Thermus thermophilus (strain ATCC BAA-163 / DSM 7039 / HB27).